Reading from the N-terminus, the 690-residue chain is Protein O-mannosyl-transferase F38B6.6 (690 aa).

The segment at 1-24 is disordered; that stretch reads MKKHLHHKVSGSCDPGDRSPKEKG. The Cytoplasmic portion of the chain corresponds to 1–32; sequence MKKHLHHKVSGSCDPGDRSPKEKGRSQGIRNL. Residues 15-24 show a composition bias toward basic and acidic residues; sequence PGDRSPKEKG. The chain crosses the membrane as a helical span at residues 33 to 53; sequence LILISLSIIPYLSCLGGDFVF. At 54–110 the chain is on the extracellular side; sequence DDAESIVNNPIVNGKDPLLQIFSRDFWGRSISSSNSHKSYRPVTTFTFWLNYKLHET. A helical transmembrane segment spans residues 111-131; it reads STLGYHVVNIICHTVATLVFY. Residues 132–138 are Cytoplasmic-facing; it reads KLGKQLE. A helical transmembrane segment spans residues 139–159; it reads HIFDFFNIAFSASILFAVHPV. The Extracellular segment spans residues 160–166; the sequence is HTEAVAN. N-linked (GlcNAc...) asparagine glycosylation is present at Asn-166. A helical transmembrane segment spans residues 167–187; it reads ITGRAELLMTIFSLAALILHV. Over 188–234 the chain is Cytoplasmic; the sequence is KNREINCKFVLLVILSTLSKEQGLMTIPIAICIDFLAHRSCRSNFVR. The chain crosses the membrane as a helical span at residues 235–255; sequence MICLLVAIGFLRMMVNGFEAA. Residues 256 to 273 are Extracellular-facing; sequence KFTKLDNPTAFLNSKFYR. A helical membrane pass occupies residues 274-294; the sequence is MINYTYIWLYHAYLLVIPVNL. The Cytoplasmic portion of the chain corresponds to 295–307; the sequence is CFDYSMGCISSIT. A helical membrane pass occupies residues 308–328; it reads TMWDLRALSPVLIFTIVIIGV. Residues 329–341 lie on the Extracellular side of the membrane; that stretch reads KFQNECRAFTLSS. Residues 342 to 362 form a helical membrane-spanning segment; the sequence is LMGIISFLPASNIFFTVGFSI. Residues 363–365 are Cytoplasmic-facing; it reads AER. The helical transmembrane segment at 366–386 threads the bilayer; it reads VLYLPSAGFCLLCAIIFKKLS. The Extracellular portion of the chain corresponds to 387–690; that stretch reads VHFKNADVLS…EHNCYNSTLP (304 aa). TPR repeat units follow at residues 398 to 431, 432 to 465, 466 to 499, 500 to 533, and 534 to 567; these read TLILLLISKTYRRSGEWKTELSLYSSGLSVCPTN, AKIHYNLGKVLGDNGLTKDAEKNYWNAIKLDPSY, EQALNNLGNLLEKSGDSKTAESLLARAVTLRPSF, AVAWMNLGISQMNLKKYYEAEKSLKNSLLIRPNS, and AHCLFNLGVLYQRTNRDEMAMSAWKNATRIDPSH. 3 N-linked (GlcNAc...) asparagine glycosylation sites follow: Asn-559, Asn-600, and Asn-617. TPR repeat units lie at residues 602 to 635 and 636 to 669; these read SRVHMQIGSCHAKHSNFTAAENHIKSAIDLNPTS and VLFHANLGILYQRMSRHKEAESQYRIVLALDSKN. Asn-686 carries an N-linked (GlcNAc...) asparagine glycan.

The protein belongs to the TMTC family.

It is found in the membrane. Its subcellular location is the endoplasmic reticulum. The catalysed reaction is a di-trans,poly-cis-dolichyl beta-D-mannosyl phosphate + L-seryl-[protein] = 3-O-(alpha-D-mannosyl)-L-seryl-[protein] + a di-trans,poly-cis-dolichyl phosphate + H(+). It carries out the reaction a di-trans,poly-cis-dolichyl beta-D-mannosyl phosphate + L-threonyl-[protein] = 3-O-(alpha-D-mannosyl)-L-threonyl-[protein] + a di-trans,poly-cis-dolichyl phosphate + H(+). It participates in protein modification; protein glycosylation. Transfers mannosyl residues to the hydroxyl group of serine or threonine residues. This chain is Protein O-mannosyl-transferase F38B6.6, found in Caenorhabditis elegans.